Here is a 102-residue protein sequence, read N- to C-terminus: ATP-dependent Clp protease adapter protein ClpS (102 aa).

Belongs to the ClpS family. Binds to the N-terminal domain of the chaperone ClpA.

Its function is as follows. Involved in the modulation of the specificity of the ClpAP-mediated ATP-dependent protein degradation. This chain is ATP-dependent Clp protease adapter protein ClpS, found in Shewanella pealeana (strain ATCC 700345 / ANG-SQ1).